We begin with the raw amino-acid sequence, 515 residues long: 1-pyrroline-5-carboxylate dehydrogenase (515 aa).

Catalysis depends on residues glutamate 286 and cysteine 320.

The protein belongs to the aldehyde dehydrogenase family. RocA subfamily.

It catalyses the reaction L-glutamate 5-semialdehyde + NAD(+) + H2O = L-glutamate + NADH + 2 H(+). It participates in amino-acid degradation; L-proline degradation into L-glutamate; L-glutamate from L-proline: step 2/2. In Bacillus cereus (strain B4264), this protein is 1-pyrroline-5-carboxylate dehydrogenase.